Here is an 840-residue protein sequence, read N- to C-terminus: MKLFNKEEASFETLLKRLLVVCESHSRYHGSSLDPMVKVGHEMRKISGYLRCILRKHAANHDGMSLTQSIVNSYKSLFKDAQILDLYHNLLFGCMHLLLDANMSYFRMDSQKLFAVLLFKVYYKLRDIFYVTNEVRLGSLISAFVYKFKSCYDFISCNSLKYGSVRDVISGEVSLINLPPIDSNKVINRAYYRLDVKKLAINNKLVEILELDNGEIAIFEVLSEKMPYTLQTIDNLFQSLALGNHDLMNVGRSLLFRPFRSGDLDLIRLDDSGAKLKVPINNSIVLRLTCKDPIQWQEYWKHVIRKLFDSTATKEYKRSGSKISQQVYVRSNKPDYTSPKRNDDMPISSVKISDTIHNGRTLHRSIPLPGSLSSLIETSNEYPDEESLSIMSERATVSEDSDLDTSLKDIESLSCEKLIELDKSIQVPLSPKYMDTPTLKNIRTASQTFSLESVSPELIESVASEIDDSESIISEDGKDKRDKDLFDPDIDFYKPTLYRRKSSSLLSIFSKNKKNLTIDIPKNHSRSLFSLPGNQQSVTPISASPHDDNVDETYVSFPLSINTSGGAVYFENNSVKVSLWNGKSWVPLSKDMLCLSLILSGDNETLLIIYKDFEREKCKLVVKLEPTWKYNRSTAQDVQLRIPSSDFKASVFGTLHDLTLSIRCAQAAKLVNVLQYQLQSSQTSSLSPSTTTGTLSTVSSSSCFSRNVTRSSTENSELANMKDSSEYISSSLLLSSVKVRQHVKTKADVWKPSRVGYTDIFSQEYKGIVVAIKFVICSDAEGTLYPREYNSRLHDIKRLGRTGLSFTDKKEAYLLEFKNQDVVDHVHKLILPFNTSWQSS.

It belongs to the UPF0508 family.

The polypeptide is UPF0508 protein SCY_2952 (Saccharomyces cerevisiae (strain YJM789) (Baker's yeast)).